A 197-amino-acid chain; its full sequence is Large ribosomal subunit protein bL17 (197 aa).

The disordered stretch occupies residues 120–197 (DVPPADTGQG…EEEESEEDNT (78 aa)). Over residues 127 to 136 (GQGGSGGTRR) the composition is skewed to gly residues. A compositionally biased stretch (acidic residues) spans 159-197 (SSDEESESVEEDEATAEEASADAEQGEAEEEEESEEDNT).

The protein belongs to the bacterial ribosomal protein bL17 family. As to quaternary structure, part of the 50S ribosomal subunit. Contacts protein L32.

In Salinibacter ruber (strain DSM 13855 / M31), this protein is Large ribosomal subunit protein bL17.